Reading from the N-terminus, the 558-residue chain is N-terminal histidine N-methyltransferase (558 aa).

The Cytoplasmic segment spans residues 1–15; the sequence is MAPFRSIYEKDATKK. Residues 16–32 traverse the membrane as a helical segment; that stretch reads LVVGAALLVLAAFYSYV. Residues 33 to 49 lie on the Lumenal side of the membrane; it reads FLLTLAPVYGSTPSHIF. A helical membrane pass occupies residues 50 to 65; sequence HGYGVGIAGVAGWFSK. Topologically, residues 66–77 are cytoplasmic; it reads DIVDRVSGRKAI. The helical transmembrane segment at 78-96 threads the bilayer; it reads YAIPVLAFFLPVVQYFVSQ. At 97 to 104 the chain is on the lumenal side; that stretch reads QSSALGNP. A helical membrane pass occupies residues 105 to 131; that stretch reads AGPIFTEVLALYPLVLLSVACAGKLVQ. The Cytoplasmic portion of the chain corresponds to 132 to 145; sequence AGLNLQRHGDLVAE. Residues 146 to 169 traverse the membrane as a helical segment; sequence HIPLLGSYVIYSAGEHLIKAFLSR. At 170 to 172 the chain is on the lumenal side; that stretch reads FIG. The helical transmembrane segment at 173–194 threads the bilayer; that stretch reads STVLLSRAGLQILIAIFYAAAV. The Cytoplasmic portion of the chain corresponds to 195–197; sequence PSK. The chain crosses the membrane as a helical span at residues 198–215; that stretch reads ALLLAIPAFLFSVTSNTH. Over 216-558 the chain is Lumenal; the sequence is LPLGHTTTAL…VLPDRVWEGW (343 aa).

It belongs to the methyltransferase superfamily.

Its subcellular location is the endoplasmic reticulum membrane. It carries out the reaction L-histidyl-[protein] + S-adenosyl-L-methionine = N(tele)-methyl-L-histidyl-[protein] + S-adenosyl-L-homocysteine + H(+). In terms of biological role, protein-histidine N-methyltransferase that specifically mediates 3-methylhistidine (tele-methylhistidine) methylation at 'His-1', which protects the side-chain from oxidative damage. Methylates lytic polysaccharide monooxygenases (LPMOs) destined for secretion, including AN4702. This Emericella nidulans (strain FGSC A4 / ATCC 38163 / CBS 112.46 / NRRL 194 / M139) (Aspergillus nidulans) protein is N-terminal histidine N-methyltransferase.